We begin with the raw amino-acid sequence, 328 residues long: Phosphate acyltransferase (328 aa).

The protein belongs to the PlsX family. In terms of assembly, homodimer. Probably interacts with PlsY.

Its subcellular location is the cytoplasm. It catalyses the reaction a fatty acyl-[ACP] + phosphate = an acyl phosphate + holo-[ACP]. Its pathway is lipid metabolism; phospholipid metabolism. Functionally, catalyzes the reversible formation of acyl-phosphate (acyl-PO(4)) from acyl-[acyl-carrier-protein] (acyl-ACP). This enzyme utilizes acyl-ACP as fatty acyl donor, but not acyl-CoA. This chain is Phosphate acyltransferase, found in Pseudothermotoga lettingae (strain ATCC BAA-301 / DSM 14385 / NBRC 107922 / TMO) (Thermotoga lettingae).